The following is a 309-amino-acid chain: MITTVVGSYPATPREPETLRERISSFIGSYDACRPAIETAVRDQVRAGVDIISDGQVRGDMVGHFAEAMGGMMVKDGVSIIFSRITPPAGSIGSDDLIYAIKILRKLTDDESKGVKGIITGPSTMAHASKIEGFYSPQKRERAIMDMADALRVEAEHLQDAGALMIQIDEPFLSTGMVDMGTARRAVKRISGALDVDVSLHVCGDISGVIGELLTFPVDMLDLEFAGRPSNLEVLAEKWRGDKKLGFGCVDTSTEVVESTDTIKNLIERGADIAGEDNLYIDPDCGMRKLPREAAFSKLRNMVKAASEF.

Zn(2+) is bound by residues His-201, Cys-203, Glu-224, and Cys-285.

The protein belongs to the archaeal MetE family. Zn(2+) is required as a cofactor.

Its pathway is amino-acid biosynthesis; L-methionine biosynthesis via de novo pathway. Its activity is regulated as follows. Is activated by phosphates. In terms of biological role, catalyzes the transfer of a methyl group to L-homocysteine resulting in methionine formation. Can use methylcobalamin and methylcobinamide as methyl donors, but methylcobalamin is not considered to be the physiological substrate. It was proposed that, in vivo, a so-far-unidentified enzyme catalyzes methyltransfer from 5-methyltetrahydromethanopterin (5-CH3-H4MPT) to a corrinoid protein, and that the MetE gene product catalyzes the further transfer to L-homocysteine. Is not active with L-cysteine, coenzyme M, coenzyme B, glutathione or dithiothreitol as substrate. In Methanothermobacter marburgensis (strain ATCC BAA-927 / DSM 2133 / JCM 14651 / NBRC 100331 / OCM 82 / Marburg) (Methanobacterium thermoautotrophicum), this protein is Methionine synthase.